The chain runs to 350 residues: Protein disulfide isomerase Creld2 (350 aa).

The first 22 residues, 1–22, serve as a signal peptide directing secretion; it reads MHLLLAAAFGLLLLLPPPGAVA. A CXXC motif is present at residues 29–32; that stretch reads CQRC. Cystine bridges form between C29/C32, C138/C152, C146/C164, and C166/C175. The EGF-like 1 domain maps to 134–176; the sequence is DCQECQGGSERPCSGNGYCSGDGSRQGDGSCQCHTGYKGPLCI. The FU 1 repeat unit spans residues 191-238; it reads HSICSACDESCKTCSGPSNKDCIQCEVGWARVEDACVDVDECAAETSP. An N-linked (GlcNAc...) asparagine glycan is attached at N249. One copy of the FU 2 repeat lies at 251-298; the sequence is SYTCEDCDSTCVGCTGKGPANCKECIAGYTKESGQCTDIDECSLEEKA. The CXXC motif lies at 261 to 264; the sequence is CVGC. 4 cysteine pairs are disulfide-bonded: C261-C264, C292-C306, C299-C315, and C317-C328. The EGF-like 2; calcium-binding domain occupies 288–329; that stretch reads DIDECSLEEKACKRKNENCYNVPGSFVCVCPEGFEETEDACV.

The protein belongs to the CRELD family. In terms of assembly, interacts with CHRNA4. Component of a complex containing at least CRELD2, MANF, MATN3 and PDIA4. As to expression, expressed in chondrocytes (at protein level).

The protein resides in the endoplasmic reticulum. The catalysed reaction is Catalyzes the rearrangement of -S-S- bonds in proteins.. In terms of biological role, protein disulfide isomerase. Might play a role in the unfolded protein response. May regulate transport of alpha4-beta2 neuronal acetylcholine receptor. This is Protein disulfide isomerase Creld2 (Creld2) from Mus musculus (Mouse).